A 102-amino-acid chain; its full sequence is uncharacterized protein (102 aa).

This is an uncharacterized protein from Sulfolobus islandicus rod-shaped virus 1 (SIRV-1).